A 166-amino-acid polypeptide reads, in one-letter code: Small ribosomal subunit protein uS5 (166 aa).

The S5 DRBM domain maps to 12-75 (YIEKLVQVNR…EAARRNMIQV (64 aa)).

This sequence belongs to the universal ribosomal protein uS5 family. Part of the 30S ribosomal subunit. Contacts proteins S4 and S8.

Its function is as follows. With S4 and S12 plays an important role in translational accuracy. In terms of biological role, located at the back of the 30S subunit body where it stabilizes the conformation of the head with respect to the body. The sequence is that of Small ribosomal subunit protein uS5 from Ectopseudomonas mendocina (strain ymp) (Pseudomonas mendocina).